The primary structure comprises 868 residues: MHEQYTPRDIEAAAQHFWDEQQSFAVTEQPGKDTYYCLSMFPYPSGKLHMGHVRNYTIGDVIARYQRMLGKNVLQPMGWDAFGMPAENAAMKNNVAPAKWTYENIDYMKTQLKSLGLAIDWAREVTTCKPDYYRWEQWLFTRLFEKGIIYRKNGTVNWDPADQTVLANEQVIDGRGWRSGALIEKREIPMYYFRITDYADELLESLDELPGWPEQVKTMQRNWIGKSRGMEVQFPYDQASIGHEGTLKVFTTRPDTLMGATYVAVAAEHPLATQAAQGNPALQAFIDECKSGSVAEADMATQEKKGMPTSLLVEHPLTGEKLPVWVANYVLMHYGDGAVMAVPAHDERDFEFAHKYNLPVKAVVRTSAGDEVGSEWQAAYGEHGQLINSGEFDGLDFAGAFDAIEAALIRKELGKSRTQFRLRDWGISRQRYWGCPIPIIHCPSCGDVPVPEDQLPVTLPENVVPDGAGSPLARMPEFYECSCPKCGAAAKRETDTMDTFVESSWYFARYASPNYDKGLVDPKAANHWLPVDQYIGGIEHAILHLLYARFFHKLMRDEGLVTSNEPFKNLLTQGMVVAETYYRVASNGGKDWFNPADVEIERDAKAKIIGARLKTDGLPVEIGGTEKMSKSKNNGVDPQSMIEAYGADTCRLFMMFASPPDMSLEWSDSGVEGASRFLRRVWRLAQGHVNQGLPGKLDLAALNDEQKVIRRAIHTAIKQASTDVGQYHKFNTAIAQVMTVMNVLEKAPQSTEQDRALLQEGLEAVTLLLAPITPHISHELWKALGHEQAVIDACWPVVDESALVQDTVTLVVQVNGKLRGQVEMPAAASREEIEAAARNNENVLRFIDGLTIRKVIVVPGKLVNIVAN.

The short motif at 42–52 (PYPSGKLHMGH) is the 'HIGH' region element. Residues 627–631 (KMSKS) carry the 'KMSKS' region motif. Position 630 (K630) interacts with ATP.

This sequence belongs to the class-I aminoacyl-tRNA synthetase family.

The protein resides in the cytoplasm. The catalysed reaction is tRNA(Leu) + L-leucine + ATP = L-leucyl-tRNA(Leu) + AMP + diphosphate. The protein is Leucine--tRNA ligase of Pseudomonas putida (strain W619).